Here is a 395-residue protein sequence, read N- to C-terminus: Tyrosine--tRNA ligase 2 (395 aa).

The 'HIGH' region signature appears at 42-51 (PTAPDIHLGH). The 'KMSKS' region motif lies at 226-230 (KMSKS). Residue lysine 229 participates in ATP binding. The S4 RNA-binding domain maps to 334 to 395 (TPMANLLKEA…KRKFARITIA (62 aa)).

This sequence belongs to the class-I aminoacyl-tRNA synthetase family. TyrS type 2 subfamily. Homodimer.

It localises to the cytoplasm. It catalyses the reaction tRNA(Tyr) + L-tyrosine + ATP = L-tyrosyl-tRNA(Tyr) + AMP + diphosphate + H(+). Catalyzes the attachment of tyrosine to tRNA(Tyr) in a two-step reaction: tyrosine is first activated by ATP to form Tyr-AMP and then transferred to the acceptor end of tRNA(Tyr). The sequence is that of Tyrosine--tRNA ligase 2 from Vibrio vulnificus (strain CMCP6).